The primary structure comprises 304 residues: Hairy/enhancer-of-split related with YRPW motif protein 1 (304 aa).

The disordered stretch occupies residues 1–52; the sequence is MKRAHPEYSSSESELDETIEVEKESADENGNLSSALGSMSPTTSSQILARKR. A compositionally biased stretch (polar residues) spans 28–47; sequence ENGNLSSALGSMSPTTSSQI. The interval 48–117 is transcriptional repression and interaction with NCOR1 and SIN3A; that stretch reads LARKRRRGII…GGKGYFDAHA (70 aa). Residues 49-104 form the bHLH domain; it reads ARKRRRGIIEKRRRDRINNSLSELRRLVPSAFEKQGSAKLEKAEILQMTVDHLKML. An Orange domain is found at 122 to 158; sequence YRSLGFRECLAEVARYLSIIEGLDASDPLRVRLVSHL. The segment covering 197 to 211 has biased composition (polar residues); that stretch reads SQSTHGNTGTSASPT. The interval 197–234 is disordered; the sequence is SQSTHGNTGTSASPTESHHQGRLATAHPEASALRAPPS. The YRPW motif signature appears at 294 to 297; the sequence is YRPW.

Belongs to the HEY family. Self-associates. Interacts with HES1 and HEYL. Interacts with HDAC1, NCOR1 and SIN3A. Interacts with GATA4 and GATA6. Interacts with CCDC89/BOIP.

Its subcellular location is the nucleus. Its function is as follows. Transcriptional repressor which binds preferentially to the canonical E box sequence 5'-CACGTG-3'. Downstream effector of Notch signaling required for cardiovascular development. Specifically required for the Notch-induced endocardial epithelial to mesenchymal transition, which is itself criticial for cardiac valve and septum development. May be required in conjunction with HEY2 to specify arterial cell fate or identity. Promotes maintenance of neuronal precursor cells and glial versus neuronal fate specification. Represses transcription by the cardiac transcriptional activators GATA4 and GATA6 and by the neuronal bHLH factors ASCL1/MASH1 and NEUROD4/MATH3. The polypeptide is Hairy/enhancer-of-split related with YRPW motif protein 1 (HEY1) (Bos taurus (Bovine)).